Consider the following 563-residue polypeptide: IQCJ-SCHIP1 readthrough transcript protein (563 aa).

Residues 47–67 (ESKVKIIQRAWREYLQRQEPL) form the IQ domain. Disordered regions lie at residues 63–150 (RQEP…VSAL), 164–295 (VIDE…EPPV), 312–336 (FREQEVRNQGQARTNSTSAQKNERE), and 384–430 (SGSD…SLDD). Low complexity predominate over residues 76–87 (SVSSEKLSSSVS). The span at 88 to 97 (MNTFSDSSTP) shows a compositional bias: polar residues. The span at 108–143 (SDAGSSSSSSRASSQSNSTKVTPCSECKSSSSPGGS) shows a compositional bias: low complexity. The span at 168–182 (WAPEEDGEEEEEEDE) shows a compositional bias: acidic residues. Basic and acidic residues-rich tracts occupy residues 183–199 (RDQRGYRDDRSPAREPG) and 229–238 (HQHDPQDLRH). Ser-193 carries the post-translational modification Phosphoserine. Polar residues predominate over residues 318–331 (RNQGQARTNSTSAQ). Residues 385-399 (GSDKDSDADDSKTET) show a composition bias toward basic and acidic residues. Positions 400 to 411 (SLDTPLSPMSKQ) are enriched in polar residues. Positions 419 to 563 (DTTEEESESL…KHMAEKMPAK (145 aa)) are required for interaction with ankyrins. The segment covering 420 to 430 (TTEEESESLDD) has biased composition (acidic residues). Residues 500–534 (IGQLQVIVNDLHSQIESLNEELVQLLLIRDELHTE) adopt a coiled-coil conformation.

As to quaternary structure, homooligomer (via coiled coil domain). Interacts (via IQ domain) with calmodulin; the interaction is direct and lost in presence of calcium. Interacts with ANK3 (via ANK repeats); required for localization at axon initial segments (AIS) and nodes of Ranvier. Interacts with SPTBN4. Interacts with KCNQ2 and KCNQ3. As to expression, highly expressed in brain and to a lower extent in heart and kidney.

The protein resides in the cell projection. It is found in the axon. The protein localises to the cytoplasm. Functionally, may play a role in action potential conduction in myelinated cells through the organization of molecular complexes at nodes of Ranvier and axon initial segments. May also play a role in axon outgrowth and guidance. The chain is IQCJ-SCHIP1 readthrough transcript protein from Homo sapiens (Human).